A 195-amino-acid chain; its full sequence is Imidazoleglycerol-phosphate dehydratase (195 aa).

Belongs to the imidazoleglycerol-phosphate dehydratase family.

Its subcellular location is the cytoplasm. The enzyme catalyses D-erythro-1-(imidazol-4-yl)glycerol 3-phosphate = 3-(imidazol-4-yl)-2-oxopropyl phosphate + H2O. The protein operates within amino-acid biosynthesis; L-histidine biosynthesis; L-histidine from 5-phospho-alpha-D-ribose 1-diphosphate: step 6/9. The chain is Imidazoleglycerol-phosphate dehydratase from Cereibacter sphaeroides (strain ATCC 17023 / DSM 158 / JCM 6121 / CCUG 31486 / LMG 2827 / NBRC 12203 / NCIMB 8253 / ATH 2.4.1.) (Rhodobacter sphaeroides).